The following is a 363-amino-acid chain: Chorismate synthase (363 aa).

The NADP(+) site is built by Arg-48 and Arg-54. FMN-binding positions include Arg-131–Ser-133, Asn-244–Ala-245, Gly-288, Lys-303–Ser-307, and Arg-329.

It belongs to the chorismate synthase family. As to quaternary structure, homotetramer. It depends on FMNH2 as a cofactor.

It catalyses the reaction 5-O-(1-carboxyvinyl)-3-phosphoshikimate = chorismate + phosphate. It participates in metabolic intermediate biosynthesis; chorismate biosynthesis; chorismate from D-erythrose 4-phosphate and phosphoenolpyruvate: step 7/7. Functionally, catalyzes the anti-1,4-elimination of the C-3 phosphate and the C-6 proR hydrogen from 5-enolpyruvylshikimate-3-phosphate (EPSP) to yield chorismate, which is the branch point compound that serves as the starting substrate for the three terminal pathways of aromatic amino acid biosynthesis. This reaction introduces a second double bond into the aromatic ring system. The polypeptide is Chorismate synthase (Maricaulis maris (strain MCS10) (Caulobacter maris)).